Reading from the N-terminus, the 306-residue chain is Probable rRNA-processing protein EBP2 (306 aa).

Met1 carries the post-translational modification N-acetylmethionine. Disordered stretches follow at residues 1–20 (MDTP…LVTD) and 77–99 (VPEI…VDPE). Residue Thr3 is modified to Phosphothreonine. 5 positions are modified to phosphoserine: Ser7, Ser9, Ser11, Ser13, and Ser16. Residue Lys94 forms a Glycyl lysine isopeptide (Lys-Gly) (interchain with G-Cter in SUMO2) linkage. Residues 138–169 (AEMAKSDLQMQKIRQKLQTKQAAMERSEKAKQ) adopt a coiled-coil conformation. Residues Lys179 and Lys218 each participate in a glycyl lysine isopeptide (Lys-Gly) (interchain with G-Cter in SUMO2) cross-link. Residues 213–306 (LEGDQKPLAQ…TREKMKNRTH (94 aa)) form a disordered region. A phosphoserine mark is found at Ser264 and Ser270. Residues 274 to 306 (KTAHGRGLKRPGKKGSNKRPGKRTREKMKNRTH) are compositionally biased toward basic residues.

This sequence belongs to the EBP2 family. As to quaternary structure, specifically interacts with EBV EBNA1. The EBNA1-EBP2 interaction is important for the stable segregation of EBV episomes during cell division. Interacts with WDR46. Ubiquitous.

The protein localises to the nucleus. It is found in the nucleolus. In terms of biological role, required for the processing of the 27S pre-rRNA. The protein is Probable rRNA-processing protein EBP2 (EBNA1BP2) of Homo sapiens (Human).